A 1187-amino-acid polypeptide reads, in one-letter code: DNA-directed RNA polymerase subunit beta (1187 aa).

Residues 1150-1187 form a disordered region; that stretch reads KDEDDDPASSADDLGFNIGARPDAAAKEDQKAEEPEYQ. The span at 1173–1187 shows a compositional bias: basic and acidic residues; sequence AAAKEDQKAEEPEYQ.

Belongs to the RNA polymerase beta chain family. In terms of assembly, the RNAP catalytic core consists of 2 alpha, 1 beta, 1 beta' and 1 omega subunit. When a sigma factor is associated with the core the holoenzyme is formed, which can initiate transcription.

The catalysed reaction is RNA(n) + a ribonucleoside 5'-triphosphate = RNA(n+1) + diphosphate. In terms of biological role, DNA-dependent RNA polymerase catalyzes the transcription of DNA into RNA using the four ribonucleoside triphosphates as substrates. In Bifidobacterium longum subsp. infantis (strain ATCC 15697 / DSM 20088 / JCM 1222 / NCTC 11817 / S12), this protein is DNA-directed RNA polymerase subunit beta.